Here is a 667-residue protein sequence, read N- to C-terminus: Bifunctional polymyxin resistance protein ArnA (667 aa).

The interval 1 to 304 (MKAIVFAYHD…EMGIVTDVRL (304 aa)) is formyltransferase ArnAFT. The Proton donor; for formyltransferase activity role is filled by H104. (6R)-10-formyltetrahydrofolate contacts are provided by residues R114 and 136-140 (VKKAD). The tract at residues 314-667 (RRTRVLILGV…TAAPKDELNA (354 aa)) is dehydrogenase ArnADH. NAD(+)-binding positions include D347 and 368–369 (DI). UDP-alpha-D-glucuronate is bound by residues A393, Y398, and 432–433 (TS). E434 serves as the catalytic Proton acceptor; for decarboxylase activity. Residues R460, N492, 526 to 535 (KLVDGGAQKR), and Y613 each bind UDP-alpha-D-glucuronate. Residue R619 is the Proton donor; for decarboxylase activity of the active site.

In the N-terminal section; belongs to the Fmt family. UDP-L-Ara4N formyltransferase subfamily. This sequence in the C-terminal section; belongs to the NAD(P)-dependent epimerase/dehydratase family. UDP-glucuronic acid decarboxylase subfamily. In terms of assembly, homohexamer, formed by a dimer of trimers.

It catalyses the reaction UDP-alpha-D-glucuronate + NAD(+) = UDP-beta-L-threo-pentopyranos-4-ulose + CO2 + NADH. The enzyme catalyses UDP-4-amino-4-deoxy-beta-L-arabinose + (6R)-10-formyltetrahydrofolate = UDP-4-deoxy-4-formamido-beta-L-arabinose + (6S)-5,6,7,8-tetrahydrofolate + H(+). The protein operates within nucleotide-sugar biosynthesis; UDP-4-deoxy-4-formamido-beta-L-arabinose biosynthesis; UDP-4-deoxy-4-formamido-beta-L-arabinose from UDP-alpha-D-glucuronate: step 1/3. Its pathway is nucleotide-sugar biosynthesis; UDP-4-deoxy-4-formamido-beta-L-arabinose biosynthesis; UDP-4-deoxy-4-formamido-beta-L-arabinose from UDP-alpha-D-glucuronate: step 3/3. It participates in bacterial outer membrane biogenesis; lipopolysaccharide biosynthesis. Functionally, bifunctional enzyme that catalyzes the oxidative decarboxylation of UDP-glucuronic acid (UDP-GlcUA) to UDP-4-keto-arabinose (UDP-Ara4O) and the addition of a formyl group to UDP-4-amino-4-deoxy-L-arabinose (UDP-L-Ara4N) to form UDP-L-4-formamido-arabinose (UDP-L-Ara4FN). The modified arabinose is attached to lipid A and is required for resistance to polymyxin and cationic antimicrobial peptides. The polypeptide is Bifunctional polymyxin resistance protein ArnA (Yersinia pseudotuberculosis serotype O:3 (strain YPIII)).